The primary structure comprises 354 residues: Arginase-2, mitochondrial (354 aa).

The N-terminal 22 residues, 1 to 22 (MFLRSSVSRLLHGQIPCALTRS), are a transit peptide targeting the mitochondrion. Positions 120, 143, 145, and 147 each coordinate Mn(2+). Substrate-binding positions include 145–149 (HADIN), 156–158 (SGN), and E202. The Mn(2+) site is built by D251 and D253. The substrate site is built by T265 and E296.

Belongs to the arginase family. As to quaternary structure, homotrimer. It depends on Mn(2+) as a cofactor.

The protein resides in the mitochondrion. The enzyme catalyses L-arginine + H2O = urea + L-ornithine. Its pathway is nitrogen metabolism; urea cycle; L-ornithine and urea from L-arginine: step 1/1. In terms of biological role, may play a role in the regulation of extra-urea cycle arginine metabolism and also in down-regulation of nitric oxide synthesis. Extrahepatic arginase functions to regulate L-arginine bioavailability to nitric oxid synthase (NOS). Arginine metabolism is a critical regulator of innate and adaptive immune responses. Seems to be involved in negative regulation of the survival capacity of activated T cells. May suppress inflammation-related signaling in asthmatic airway epithelium. May play a role in promoting prenatal immune suppression. Regulates RPS6KB1 signaling, which promotes endothelial cell senescence and inflammation and implicates NOS3/eNOS dysfunction. Can inhibit endothelial autophagy independently of its enzymatic activity implicating mTORC2 signaling. Involved in vascular smooth muscle cell senescence and apoptosis independently of its enzymatic activity. The protein is Arginase-2, mitochondrial (Arg2) of Rattus norvegicus (Rat).